The following is a 337-amino-acid chain: Glyceraldehyde-3-phosphate dehydrogenase (337 aa).

NADP(+) contacts are provided by residues Thr11–Val12, Thr34–Arg35, and Gly110. Ser139–Asn141 provides a ligand contact to D-glyceraldehyde 3-phosphate. The active-site Nucleophile is Cys140. Asp171 contacts NADP(+). Residue His194–Gly195 coordinates D-glyceraldehyde 3-phosphate. Residue Gln300 participates in NADP(+) binding.

Belongs to the glyceraldehyde-3-phosphate dehydrogenase family. As to quaternary structure, homotetramer.

Its subcellular location is the cytoplasm. It carries out the reaction D-glyceraldehyde 3-phosphate + phosphate + NADP(+) = (2R)-3-phospho-glyceroyl phosphate + NADPH + H(+). It catalyses the reaction D-glyceraldehyde 3-phosphate + phosphate + NAD(+) = (2R)-3-phospho-glyceroyl phosphate + NADH + H(+). It participates in carbohydrate degradation; glycolysis; pyruvate from D-glyceraldehyde 3-phosphate: step 1/5. Functionally, exhibits a dual-cofactor specificity, with a marked preference for NADP(+) over NAD(+). The chain is Glyceraldehyde-3-phosphate dehydrogenase (gap) from Methanothermus fervidus.